We begin with the raw amino-acid sequence, 489 residues long: DNA-directed RNA polymerase subunit beta' C-terminal section (489 aa).

Mg(2+) is bound by residues aspartate 208, aspartate 210, and aspartate 212.

This sequence belongs to the RNA polymerase beta' chain family. RpoC1 subfamily. As to quaternary structure, in plastids the minimal PEP RNA polymerase catalytic core is composed of four subunits: alpha, beta, beta', and beta''. When a (nuclear-encoded) sigma factor is associated with the core the holoenzyme is formed, which can initiate transcription. Mg(2+) serves as cofactor.

The protein localises to the plastid. Its subcellular location is the chloroplast. The enzyme catalyses RNA(n) + a ribonucleoside 5'-triphosphate = RNA(n+1) + diphosphate. Its function is as follows. DNA-dependent RNA polymerase catalyzes the transcription of DNA into RNA using the four ribonucleoside triphosphates as substrates. This Chlamydomonas reinhardtii (Chlamydomonas smithii) protein is DNA-directed RNA polymerase subunit beta' C-terminal section (rpoC1B).